Consider the following 268-residue polypeptide: Gasdermin bGSDM (268 aa).

Cys-3 carries S-palmitoyl cysteine lipidation. Transmembrane regions (beta stranded) follow at residues 78–94, 103–121, 168–185, and 195–211; these read IDLRKTNSLSSAVAAKI, APSFDLAFENSSSVIFHIE, KMRMQFERKNKGELGVDV, and AKLESKIEGSTYDRLVF. A C-terminal region region spans residues 248–268; sequence GENMALNLFTEIQDAGFIEVT.

This sequence belongs to the bacterial gasdermin family. As to quaternary structure, monomer in solution. In terms of assembly, forms large, homooligomeric ring-shaped pores when inserted in membranes. In terms of processing, cleavage by the adjacently encoded protease (G563DRAFT_02009) between Leu-247 and Gly-248 relieves autoinhibition, releasing the N-terminus which initiates loss of cell integrity. Palmitoylation helps stabilize the inactive state; may self-palmitoylate. Palmitoylation is not required for permeabilization of liposomes by the ring-like pores in vitro. Palmitoylation plays a significant role in pore formation.

It is found in the cytoplasm. The protein resides in the cell inner membrane. Its activity is regulated as follows. The full-length protein before cleavage is inactive: intramolecular interactions between the N-terminal domain and the C-terminal region, as well as the lipid modification, mediate autoinhibition. The pyroptosis-like-inducing activity is carried by the released N-terminal domain (gasdermin bGSDM, N-terminus). In terms of biological role, precursor of a pore-forming protein involved in defense against bacteriophages. Cleavage of this precursor by its dedicated, neighboring protease (G563DRAFT_02009) releases the active moiety (gasdermin bGSDM, N-terminus) which inserts into membranes, forming pores and triggering cell death. Expression of bGSDM and its protease is highly toxic in E.coli. Cells expressing the gene pair stop dividing and lose membrane integrity. Both proteins are required to kill E.coli. Functionally, pore-forming protein that causes membrane permeabilization via a pyroptosis-like activity. Makes ring-like pores with walls about 50 Angstroms thick and an interior pore diameter of 200-300 Angstroms, when integrated in liposomes. This chain is Gasdermin bGSDM, found in Runella zeae (strain ATCC BAA-293 / DSM 19591 / LMG 21438 / NS12).